Consider the following 729-residue polypeptide: MAKSVVIAEKPSVARDIARVLKCDKKGNGYLEGSKYIVTWALGHLVTLADPESYDVKYKKWNLEDLPMLPERLKLTVIKQTGKQFNAVKSQLLRKDVNEIIVATDAGREGELVARWIIDKVRINKPIKRLWISSVTDKAIKDGFANLKPGKAYDNLYASAVARSEADWYIGLNATRALTTRFNAQLNCGRVQTPTVAMIANREDEIKNFKAQTYYGIEAQTTNQLKLTWQDANGNSRSFNKEKIDGIVKGLDKHNATVLEIDKKQKKSFSPGLYDLTELQRDANKKFGYSAKETLNIMQKLYEQHKVLTYPRTDSRYISSDIVGTLPERLKACGVGEYRPLAHKVLQKPIKANKSFVDDSKVSDHHAIIPTEGYVNFSAFTDKERKIYDLVVKRFLAVLFPAFEYEQLTLRTKIGNETFIARGKTILHAGWKEVYENRFEDDDVTDEVKEQLLPRIEKGDTLTVKLIMQTSGQTKAPARFNEATLLSAMENPTKYMDTQNKQLADTLKSTGGLGTVATRADIIDKLFNSFLIEKRGKDIHITSKGRQLLDLVPEELKSPTLTGEWEQKLEAIAKGKLKKEVFISEMKNYTKEIVSEIKSSDKKYKHDNISTKSCPDCGKPMLEVNGKKGKMLVCQDRECGHRKNVSRTTNARCPQCKKKLELRGEGAGQIFACKCGYREKLSTFQERRKKESGNKADKRDVQKYMKQQKKEEEPLNNPFAEALKKLKFD.

The region spanning 3–136 is the Toprim domain; the sequence is KSVVIAEKPS…IKRLWISSVT (134 aa). Residues glutamate 9 and aspartate 105 each coordinate Mg(2+). Residues 153–594 enclose the Topo IA-type catalytic domain; sequence YDNLYASAVA…EMKNYTKEIV (442 aa). Positions 187-192 are interaction with DNA; the sequence is NCGRVQ. Catalysis depends on tyrosine 310, which acts as the O-(5'-phospho-DNA)-tyrosine intermediate. Over residues 686 to 713 the composition is skewed to basic and acidic residues; it reads ERRKKESGNKADKRDVQKYMKQQKKEEE. Residues 686 to 718 form a disordered region; it reads ERRKKESGNKADKRDVQKYMKQQKKEEEPLNNP.

The protein belongs to the type IA topoisomerase family. Mg(2+) is required as a cofactor.

The catalysed reaction is ATP-independent breakage of single-stranded DNA, followed by passage and rejoining.. Its function is as follows. Releases the supercoiling and torsional tension of DNA, which is introduced during the DNA replication and transcription, by transiently cleaving and rejoining one strand of the DNA duplex. Introduces a single-strand break via transesterification at a target site in duplex DNA. The scissile phosphodiester is attacked by the catalytic tyrosine of the enzyme, resulting in the formation of a DNA-(5'-phosphotyrosyl)-enzyme intermediate and the expulsion of a 3'-OH DNA strand. The free DNA strand then undergoes passage around the unbroken strand, thus removing DNA supercoils. Finally, in the religation step, the DNA 3'-OH attacks the covalent intermediate to expel the active-site tyrosine and restore the DNA phosphodiester backbone. This is DNA topoisomerase 3 from Bacillus cereus (strain ZK / E33L).